The primary structure comprises 385 residues: tRNA-specific 2-thiouridylase MnmA (385 aa).

Residues 30 to 37 and M56 each bind ATP; that span reads GMSGGVDS. The interaction with target base in tRNA stretch occupies residues 118-120; that stretch reads NPD. The Nucleophile role is filled by C123. A disulfide bridge links C123 with C220. G148 is a binding site for ATP. The tract at residues 170-172 is interaction with tRNA; it reads KDQ. C220 functions as the Cysteine persulfide intermediate in the catalytic mechanism. The segment at 332–333 is interaction with tRNA; that stretch reads RY.

This sequence belongs to the MnmA/TRMU family.

The protein localises to the cytoplasm. It carries out the reaction S-sulfanyl-L-cysteinyl-[protein] + uridine(34) in tRNA + AH2 + ATP = 2-thiouridine(34) in tRNA + L-cysteinyl-[protein] + A + AMP + diphosphate + H(+). Functionally, catalyzes the 2-thiolation of uridine at the wobble position (U34) of tRNA, leading to the formation of s(2)U34. The protein is tRNA-specific 2-thiouridylase MnmA of Haemophilus influenzae (strain PittGG).